We begin with the raw amino-acid sequence, 396 residues long: Calreticulin (396 aa).

The N-terminal stretch at 1-15 (MKSLCLLAIVAVVSA) is a signal peptide. A disulfide bridge connects residues Cys-101 and Cys-133. The an alpha-D-glucoside site is built by Tyr-105, Lys-107, Tyr-124, and Asp-131. Repeat copies occupy residues 186-197 (AQTGSLEEDWDL), 205-216 (DPDAKKPEDWDE), 222-233 (DAEDVKPEDWEK), 239-250 (DPDAKKPEDWDD), 254-264 (GEWEPPMIDNP), 268-278 (GEWKPKQIKNP), and 282-292 (GKWIHPEIENP). The interval 186–250 (AQTGSLEEDW…DAKKPEDWDD (65 aa)) is 4 X approximate repeats. Residues 193-301 (EDWDLLPAKK…PEYTPDDELY (109 aa)) form a P-domain region. Residues 202–212 (KIKDPDAKKPE) show a composition bias toward basic and acidic residues. Positions 202–250 (KIKDPDAKKPEDWDEREYIDDAEDVKPEDWEKPEHIPDPDAKKPEDWDD) are disordered. Positions 213–224 (DWDEREYIDDAE) are enriched in acidic residues. Residues 225 to 246 (DVKPEDWEKPEHIPDPDAKKPE) are compositionally biased toward basic and acidic residues. A 3 X approximate repeats region spans residues 254 to 292 (GEWEPPMIDNPEYKGEWKPKQIKNPAYKGKWIHPEIENP). The C-domain stretch occupies residues 302–396 (LYENWGAIGF…KEEEEGHDEL (95 aa)). Asp-312 provides a ligand contact to an alpha-D-glucoside. Basic and acidic residues predominate over residues 342-380 (FDKLKTVEKEKKEKADEEARKVEEEARKKAEEEKEAKKD). Residues 342–396 (FDKLKTVEKEKKEKADEEARKVEEEARKKAEEEKEAKKDDDEEEEKEEEEGHDEL) form a disordered region. Residues 381-396 (DDEEEEKEEEEGHDEL) show a composition bias toward acidic residues. Residues 393–396 (HDEL) carry the Prevents secretion from ER motif.

It belongs to the calreticulin family.

It is found in the endoplasmic reticulum lumen. Molecular calcium-binding chaperone promoting folding, oligomeric assembly and quality control in the ER via the calreticulin/calnexin cycle. This lectin may interact transiently with almost all of the monoglucosylated glycoproteins that are synthesized in the ER. Probably by controlling the folding of extracellular matrix protein unc-52/Perlecan, may play a role in the formation of fibrous organelles, a hemidesmosome-like structure attaching muscles to the epidermis. Protects dopaminergic neurons against oxidative stress-induced neurodegeneration. This is Calreticulin (crt-1) from Caenorhabditis briggsae.